A 152-amino-acid polypeptide reads, in one-letter code: MIALIQRVKRADVRVGDRTTGEIGAGLLALVCAERGDTDAAADKLLAKMLGYRVFSDAAGKMNLPVSNIDGEGRAGGLLLVSQFTLAADTNSGLRPSFTPAAPPDEGARLFDYFVAAARARHPVVETGEFGADMQVSLVNDGPVTFWLQVRP.

The Gly-cisPro motif, important for rejection of L-amino acids motif lies at 142–143 (GP).

This sequence belongs to the DTD family. Homodimer.

It localises to the cytoplasm. It carries out the reaction glycyl-tRNA(Ala) + H2O = tRNA(Ala) + glycine + H(+). It catalyses the reaction a D-aminoacyl-tRNA + H2O = a tRNA + a D-alpha-amino acid + H(+). In terms of biological role, an aminoacyl-tRNA editing enzyme that deacylates mischarged D-aminoacyl-tRNAs. Also deacylates mischarged glycyl-tRNA(Ala), protecting cells against glycine mischarging by AlaRS. Acts via tRNA-based rather than protein-based catalysis; rejects L-amino acids rather than detecting D-amino acids in the active site. By recycling D-aminoacyl-tRNA to D-amino acids and free tRNA molecules, this enzyme counteracts the toxicity associated with the formation of D-aminoacyl-tRNA entities in vivo and helps enforce protein L-homochirality. The polypeptide is D-aminoacyl-tRNA deacylase (Burkholderia lata (strain ATCC 17760 / DSM 23089 / LMG 22485 / NCIMB 9086 / R18194 / 383)).